The primary structure comprises 354 residues: Membrane progestin receptor alpha-B (354 aa).

The Cytoplasmic portion of the chain corresponds to 1–76 (MATVVMEQIG…LTLFQRHNES (76 aa)). A helical transmembrane segment spans residues 77-97 (VNVWTHLLASLIILVKFQELS). Over 98–110 (ETVDFLRDPHAQP) the chain is Extracellular. Residues 111-131 (MFILLLAAFTYLGCSALAHLL) traverse the membrane as a helical segment. The Cytoplasmic portion of the chain corresponds to 132–141 (SAKSEISHYT). The helical transmembrane segment at 142-162 (FYFLDYVGVAVYQYGSALAHF) threads the bilayer. Over 163–175 (YYVVEEEWHAQVR) the chain is Extracellular. Residues 176 to 196 (TFFLPASAFLAWLSCTGCCYG) traverse the membrane as a helical segment. Over 197 to 244 (KYASPKLPKFVHKLFQVVPSGLAYCLDISPVLHRIYRCYSSEHWCADQ) the chain is Cytoplasmic. A helical transmembrane segment spans residues 245-265 (AVVYHCYQVLFFLISAYFFSY). Topologically, residues 266-277 (PHPERWFPGRCD) are extracellular. Residues 278-298 (FIGQGHQIFHVFLVLCTLVQI) traverse the membrane as a helical segment. The Cytoplasmic portion of the chain corresponds to 299 to 318 (EAVRLDYTERRRLYEHLHGD). Residues 319–339 (LAHDAVALFIFTACCSALTAF) form a helical membrane-spanning segment. At 340-354 (YVRKRVKTYLEEKQE) the chain is on the extracellular side.

The protein belongs to the ADIPOR family.

It localises to the cell membrane. Its function is as follows. Steroid membrane receptor. Signals upon progestin binding, resulting in rapid activation of MAPK and down-regulation of adenylyl cyclase activity. Interacts with steroids with varying degrees of affinity, showing specificity for activation by the maturation-inducing steroid (MIS) 4-pregnen-17,20beta-diol-3-one (17,20beta-DHP). Capable of mediating progestin-induced oocyte maturation. The polypeptide is Membrane progestin receptor alpha-B (paqr7b) (Danio rerio (Zebrafish)).